We begin with the raw amino-acid sequence, 124 residues long: Acidic phospholipase A2 BA1 (124 aa).

7 disulfide bridges follow: Cys-26/Cys-116, Cys-28/Cys-44, Cys-43/Cys-95, Cys-49/Cys-124, Cys-50/Cys-88, Cys-57/Cys-81, and Cys-75/Cys-86. The Ca(2+) site is built by Tyr-27, Gly-29, and Gly-31. His-47 is a catalytic residue. Asp-48 is a Ca(2+) binding site. Residue Asp-89 is part of the active site.

Belongs to the phospholipase A2 family. Group II subfamily. D49 sub-subfamily. Requires Ca(2+) as cofactor. In terms of tissue distribution, expressed by the venom gland.

It localises to the secreted. The enzyme catalyses a 1,2-diacyl-sn-glycero-3-phosphocholine + H2O = a 1-acyl-sn-glycero-3-phosphocholine + a fatty acid + H(+). In terms of biological role, PLA2 catalyzes the calcium-dependent hydrolysis of the 2-acyl groups in 3-sn-phosphoglycerides. In Gloydius halys (Chinese water mocassin), this protein is Acidic phospholipase A2 BA1.